A 260-amino-acid chain; its full sequence is Ribosome maturation factor RimP (260 aa).

Residues 198-260 (QSLGILPPPP…RGDIDPIEGE (63 aa)) form a disordered region. Composition is skewed to basic and acidic residues over residues 210-228 (AKTD…ENGK) and 238-254 (NTKE…RGDI).

This sequence belongs to the RimP family.

It is found in the cytoplasm. Functionally, required for maturation of 30S ribosomal subunits. This is Ribosome maturation factor RimP from Nitrobacter winogradskyi (strain ATCC 25391 / DSM 10237 / CIP 104748 / NCIMB 11846 / Nb-255).